Reading from the N-terminus, the 541-residue chain is Circadian clock oscillator protein KaiC (541 aa).

The disordered stretch occupies residues 1 to 40 (MNQSLGPSEPEKPQDNTAEDSTEPTPDNHRADLSELRGIP). KaiC domains are found at residues 21 to 268 (STEP…INIF) and 282 to 541 (VRVS…EEGL). Residues 26-35 (PDNHRADLSE) show a composition bias toward basic and acidic residues. Positions 70, 71, 72, 73, 74, 75, 110, 245, 246, 247, 249, 251, 261, 311, 312, 313, 314, 315, and 316 each coordinate ATP. A Mg(2+)-binding site is contributed by T74. Mg(2+) contacts are provided by T316 and E339. W352 lines the ATP pocket. S452 is modified (phosphoserine; by autocatalysis). A Phosphothreonine; by autocatalysis modification is found at T453. ATP-binding residues include R472, K478, M479, R480, S482, H484, and K486.

This sequence belongs to the KaiC family. As to quaternary structure, homohexamer; hexamerization is dependent on ATP-binding. The KaiABC complex composition changes during the circadian cycle to control KaiC phosphorylation. Complexes KaiC(6), KaiA(2-4):KaiC(6), KaiB(6):KaiC(6) and KaiC(6):KaiB(6):KaiA(12) are among the most important forms, many form cooperatively. KaiC interacts with SasA, activating its autokinase function and leading to RpaA activation. Mg(2+) is required as a cofactor. In terms of processing, phosphorylated on serine and threonine residues by autocatalysis. Has a 4 step phosphorylation cycle; the autokinase acts first on Thr-453, then Ser-452. When Ser-452 is modified KaiC switches to an autophosphatase mode, acting first on phospho-Thr-453 then phospho-Ser-452.

It carries out the reaction L-seryl-[protein] + ATP = O-phospho-L-seryl-[protein] + ADP + H(+). It catalyses the reaction L-threonyl-[protein] + ATP = O-phospho-L-threonyl-[protein] + ADP + H(+). The catalysed reaction is ATP + H2O = ADP + phosphate + H(+). The interaction with KaiA enhances its phosphorylation status, while the interaction with KaiB decreases it. In terms of biological role, central component of the KaiABC oscillator complex, which constitutes the main circadian regulator in cyanobacteria. Complex composition changes during the circadian cycle to control KaiC phosphorylation. KaiA stimulates KaiC autophosphorylation, while KaiB sequesters KaiA, leading to KaiC autodephosphorylation. Clock output pathways impact the RpaA transcriptional regulator. KaiC enhances the autophosphorylation activity of SasA, which then transfers its phosphate group to RpaA to activate it. KaiB and KaiC together enhance the phospho-RpaA dephosphatase activity of CikA. Its function is as follows. Has a weak, temperature-independent ATPase activity; ATPase activity defines the circadian period. The phosphorylation state of KaiC modulates its ATPase activity and effects KaiB binding. This Parathermosynechococcus lividus (Thermostichus lividus) protein is Circadian clock oscillator protein KaiC.